Here is a 353-residue protein sequence, read N- to C-terminus: tRNA N6-adenosine threonylcarbamoyltransferase (353 aa).

Residues His109 and His113 each contribute to the Fe cation site. Substrate contacts are provided by residues 136–140, Asp169, Gly182, Asp186, and Asn284; that span reads TVSGG. Asp312 lines the Fe cation pocket.

It belongs to the KAE1 / TsaD family. Fe(2+) serves as cofactor.

The protein resides in the cytoplasm. The catalysed reaction is L-threonylcarbamoyladenylate + adenosine(37) in tRNA = N(6)-L-threonylcarbamoyladenosine(37) in tRNA + AMP + H(+). Required for the formation of a threonylcarbamoyl group on adenosine at position 37 (t(6)A37) in tRNAs that read codons beginning with adenine. Is involved in the transfer of the threonylcarbamoyl moiety of threonylcarbamoyl-AMP (TC-AMP) to the N6 group of A37, together with TsaE and TsaB. TsaD likely plays a direct catalytic role in this reaction. This chain is tRNA N6-adenosine threonylcarbamoyltransferase, found in Chlorobium limicola (strain DSM 245 / NBRC 103803 / 6330).